The following is a 447-amino-acid chain: MELLKLNRSVQGTGPGPGASLCRPGAPLLNSSSVGNLSCEPPRIRGAGTRELELAIRITLYAVIFLMSVGGNMLIIVVLGLSRRLRTVTNAFLLSLAVSDLLLAVACMPFTLLPNLMGTFIFGTVICKAVSYLMGVSVSVSTLSLVAIALERYSAICRPLQARVWQTRSHAARVIVATWLLSGLLMVPYPVYTVVQPVGPRVLQCVHRWPSARVRQTWSVLLLLLLFFIPGVVMAVAYGLISRELYLGLRFDGDSDSDSQSRVRNQGGLPGAVHQNGRCRPETGAVGEDSDGCYVQLPRSRPALELTALTAPGPGSGSRPTQAKLLAKKRVVRMLLVIVVLFFLCWLPVYSANTWRAFDGPGAHRALSGAPISFIHLLSYASACVNPLVYCFMHRRFRQACLETCARCCPRPPRARPRALPDEDPPTPSIASLSRLSYTTISTLGPG.

The Extracellular segment spans residues 1 to 57 (MELLKLNRSVQGTGPGPGASLCRPGAPLLNSSSVGNLSCEPPRIRGAGTRELELAIR). Asn7, Asn30, and Asn36 each carry an N-linked (GlcNAc...) asparagine glycan. A helical transmembrane segment spans residues 58-79 (ITLYAVIFLMSVGGNMLIIVVL). Residues 80–87 (GLSRRLRT) lie on the Cytoplasmic side of the membrane. A helical membrane pass occupies residues 88–109 (VTNAFLLSLAVSDLLLAVACMP). At 110-131 (FTLLPNLMGTFIFGTVICKAVS) the chain is on the extracellular side. Cys127 and Cys205 form a disulfide bridge. Residues 132–150 (YLMGVSVSVSTLSLVAIAL) traverse the membrane as a helical segment. Over 151–170 (ERYSAICRPLQARVWQTRSH) the chain is Cytoplasmic. The helical transmembrane segment at 171 to 189 (AARVIVATWLLSGLLMVPY) threads the bilayer. At 190–219 (PVYTVVQPVGPRVLQCVHRWPSARVRQTWS) the chain is on the extracellular side. Residues 220–242 (VLLLLLLFFIPGVVMAVAYGLIS) traverse the membrane as a helical segment. Topologically, residues 243–333 (RELYLGLRFD…KLLAKKRVVR (91 aa)) are cytoplasmic. The disordered stretch occupies residues 258 to 285 (DSQSRVRNQGGLPGAVHQNGRCRPETGA). A helical transmembrane segment spans residues 334 to 355 (MLLVIVVLFFLCWLPVYSANTW). The Extracellular segment spans residues 356–373 (RAFDGPGAHRALSGAPIS). A helical membrane pass occupies residues 374–394 (FIHLLSYASACVNPLVYCFMH). At 395-447 (RRFRQACLETCARCCPRPPRARPRALPDEDPPTPSIASLSRLSYTTISTLGPG) the chain is on the cytoplasmic side. Cys408 carries the S-palmitoyl cysteine lipid modification.

Belongs to the G-protein coupled receptor 1 family. Isoform 1 is expressed in brain, pancreas, stomach, the colon cancer cell line LoVo and the T-lymphoblastoma Jurkat, but not in heart, placenta, liver, lung, skeletal muscle, kidney or the stomach cancer cell line AGS. Expressed at high levels in the small cell lung cancer cell line NCI-H510, at lower levels in NCI-H345, NCI-H69 and GLC-28 cell lines, not expressed in GLC-19 cell line. Within the stomach, expressed at high levels in the mucosa of the gastric fundus and at low levels in the antrum and duodenum. Isoform 2 is present in pancreatic cancer cells and colorectal cancer cells, but not in normal pancreas or colonic mucosa. Isoform 3 is expressed in brain, pancreas, stomach, the stomach cancer cell line AGS and the colon cancer cell line LoVo.

It is found in the cell membrane. Receptor for gastrin and cholecystokinin. The CCK-B receptors occur throughout the central nervous system where they modulate anxiety, analgesia, arousal, and neuroleptic activity. This receptor mediates its action by association with G proteins that activate a phosphatidylinositol-calcium second messenger system. Functionally, isoform 2 is constitutively activated and may regulate cancer cell proliferation via a gastrin-independent mechanism. This chain is Gastrin/cholecystokinin type B receptor, found in Homo sapiens (Human).